The sequence spans 91 residues: Putative regulatory protein Moth_0891 (91 aa).

Belongs to the RemA family.

This chain is Putative regulatory protein Moth_0891, found in Moorella thermoacetica (strain ATCC 39073 / JCM 9320).